The chain runs to 385 residues: Chaperone protein DnaJ 2 (385 aa).

The region spanning 10 to 75 is the J domain; the sequence is DYYKELGVSS…AKRKEYDETR (66 aa). Residues 155-233 form a CR-type zinc finger; that stretch reads GVTVPLRMTS…CHGSGIQNRT (79 aa). Zn(2+) is bound by residues cysteine 168, cysteine 171, cysteine 185, cysteine 188, cysteine 207, cysteine 210, cysteine 221, and cysteine 224. CXXCXGXG motif repeat units lie at residues 168–175, 185–192, 207–214, and 221–228; these read CTTCHGSG, CPICNGTG, CDGCRGTG, and CVDCHGSG.

This sequence belongs to the DnaJ family. In terms of assembly, homodimer. Zn(2+) is required as a cofactor.

The protein resides in the cytoplasm. In terms of biological role, participates actively in the response to hyperosmotic and heat shock by preventing the aggregation of stress-denatured proteins and by disaggregating proteins, also in an autonomous, DnaK-independent fashion. Unfolded proteins bind initially to DnaJ; upon interaction with the DnaJ-bound protein, DnaK hydrolyzes its bound ATP, resulting in the formation of a stable complex. GrpE releases ADP from DnaK; ATP binding to DnaK triggers the release of the substrate protein, thus completing the reaction cycle. Several rounds of ATP-dependent interactions between DnaJ, DnaK and GrpE are required for fully efficient folding. Also involved, together with DnaK and GrpE, in the DNA replication of plasmids through activation of initiation proteins. The sequence is that of Chaperone protein DnaJ 2 from Nocardia farcinica (strain IFM 10152).